The sequence spans 246 residues: Thiamine import ATP-binding protein ThiQ (246 aa).

The region spanning 10–239 is the ABC transporter domain; sequence VKLDALAFAY…QGPPAFARYL (230 aa). 41 to 48 is an ATP binding site; sequence GPSGSGKS.

The protein belongs to the ABC transporter superfamily. Thiamine importer (TC 3.A.1.19.1) family. The complex is composed of two ATP-binding proteins (ThiQ), two transmembrane proteins (ThiP) and a solute-binding protein (ThiB).

Its subcellular location is the cell inner membrane. The catalysed reaction is thiamine(out) + ATP + H2O = thiamine(in) + ADP + phosphate + H(+). In terms of biological role, part of the ABC transporter complex ThiBPQ involved in thiamine import. Responsible for energy coupling to the transport system. This chain is Thiamine import ATP-binding protein ThiQ, found in Chelativorans sp. (strain BNC1).